Here is a 340-residue protein sequence, read N- to C-terminus: Ephrin-B3 (340 aa).

Residues 1 to 27 (MGAPHFGPGGVQVGALLLLGFAGLVSG) form the signal peptide. In terms of domain architecture, Ephrin RBD spans 28-167 (LSLEPVYWNS…TRGMKVLLRV (140 aa)). Residues 28 to 227 (LSLEPVYWNS…GPLPPPSMPA (200 aa)) are Extracellular-facing. Intrachain disulfides connect Cys62/Cys104 and Cys92/Cys156. Residues 168-227 (GQSPRGGAVPRKPVSEMPMERDRGAAHSAEPGRDTIPGDPSSNATSRGAEGPLPPPSMPA) form a disordered region. Positions 185 to 200 (PMERDRGAAHSAEPGR) are enriched in basic and acidic residues. Asn210 carries an N-linked (GlcNAc...) asparagine glycan. Residues 228 to 248 (VAGAAGGMALLLLGVAGAGGA) form a helical membrane-spanning segment. The Cytoplasmic segment spans residues 249 to 340 (MCWRRRRAKP…QSPPNIYYKV (92 aa)). A disordered region spans residues 254-300 (RRAKPSESRHPGPGSFGRGGSLGLGGGGGMGPREAEPGELGIALRGG). Positions 267 to 284 (GSFGRGGSLGLGGGGGMG) are enriched in gly residues. Omega-N-methylarginine is present on Arg271. Phosphoserine is present on Ser274. Residues 338-340 (YKV) carry the PDZ-binding motif.

It belongs to the ephrin family. In terms of assembly, interacts with GRIP1 and GRIP2. In terms of tissue distribution, expressed on lateral floor plate cells, specifically on commissural axon segments that have passed through the floor plate. Expressed in cells of the retinal ganglion cell layer during retinal axon guidance to the optic disk. Expressed in myogenic progenitor cells.

The protein resides in the membrane. Cell surface transmembrane ligand for Eph receptors, a family of receptor tyrosine kinases which are crucial for migration, repulsion and adhesion during neuronal, vascular and epithelial development. Binds promiscuously Eph receptors residing on adjacent cells, leading to contact-dependent bidirectional signaling into neighboring cells. The signaling pathway downstream of the receptor is referred to as forward signaling while the signaling pathway downstream of the ephrin ligand is referred to as reverse signaling. May play a pivotal role in forebrain function. Binds to, and induce the collapse of, commissural axons/growth cones in vitro. May play a role in constraining the orientation of longitudinally projecting axons. This is Ephrin-B3 (Efnb3) from Mus musculus (Mouse).